We begin with the raw amino-acid sequence, 154 residues long: Myoglobin (154 aa).

The 147-residue stretch at G2 to K148 folds into the Globin domain. A Phosphoserine modification is found at S4. Nitrite is bound at residue H65. An O2-binding site is contributed by H65. T68 is subject to Phosphothreonine. H94 is a binding site for heme b.

Belongs to the globin family. In terms of assembly, monomeric.

It is found in the cytoplasm. It localises to the sarcoplasm. It catalyses the reaction Fe(III)-heme b-[protein] + nitric oxide + H2O = Fe(II)-heme b-[protein] + nitrite + 2 H(+). It carries out the reaction H2O2 + AH2 = A + 2 H2O. Its function is as follows. Monomeric heme protein which primary function is to store oxygen and facilitate its diffusion within muscle tissues. Reversibly binds oxygen through a pentacoordinated heme iron and enables its timely and efficient release as needed during periods of heightened demand. Depending on the oxidative conditions of tissues and cells, and in addition to its ability to bind oxygen, it also has a nitrite reductase activity whereby it regulates the production of bioactive nitric oxide. Under stress conditions, like hypoxia and anoxia, it also protects cells against reactive oxygen species thanks to its pseudoperoxidase activity. In Ochotona princeps (Southern American pika), this protein is Myoglobin (MB).